The primary structure comprises 219 residues: MSGFFQRLFGKDNKPAIARGPLGLHLNSGFTLDTLAFRLLEDELLIALPGEEFTVAAVSHIDLGGGSQIFRYYTSGDEFLQINTTGGEDIDDIDDIKLFVYEESYGISKESHWREAINAKAMGAMTLNWQEKRWQRFFNSEEPGNIEPVYMLEKVENQNHAKWEVHNFTMGYQRQVTEDTYEYLLLNGEESFNDLGEPEWLFSRALGVDIPLTSLHIIG.

This is an uncharacterized protein from Escherichia coli (strain K12).